The sequence spans 403 residues: GPI-N-acetylgalactosamine transferase PGAP4 (403 aa).

Residues 1-22 lie on the Cytoplasmic side of the membrane; that stretch reads MTTSTSPAAMLLRRLRRLSWGS. A helical transmembrane segment spans residues 23–43; sequence TAVQLFILTVVTFGLLAPLAC. The Lumenal segment spans residues 44–264; that stretch reads HRLLHSYFYL…INPEPMRILE (221 aa). Val-109 serves as a coordination point for UDP-N-acetyl-alpha-D-galactosamine. 2 disulfides stabilise this stretch: Cys-132/Cys-136 and Cys-144/Cys-194. The short motif at 211–213 is the DXD motif element; the sequence is EDD. The chain crosses the membrane as a helical span at residues 265-285; the sequence is WVGVGMLLGPVLTWIYMRFAC. Residues 286–287 are Cytoplasmic-facing; it reads RP. A helical membrane pass occupies residues 288–308; the sequence is GFSWPVMLFFCLYSMGLVELV. The Lumenal portion of the chain corresponds to 309 to 403; sequence GRHYFLELRR…LRYNFHPSLL (95 aa). Cys-332 and Cys-333 form a disulfide bridge. 3 residues coordinate UDP-N-acetyl-alpha-D-galactosamine: Thr-334, Pro-335, and Lys-362.

This sequence belongs to the PGAP4 family. In terms of processing, glycosylated.

The protein resides in the golgi apparatus membrane. Golgi-resident glycosylphosphatidylinositol (GPI)-N-acetylgalactosamine transferase that catalyzes the N-acetyl-beta-D-galactosamine transfer from an UDP-N-acetyl-alpha-D-galactosamine to the 4-OH-position of first mannose of the glycosylphosphatidylinositol (GPI) of a GPI-anchored protein (GPI-AP). This modification occurs after the fatty acid remodeling step of the GPI-anchor maturation. In Mus musculus (Mouse), this protein is GPI-N-acetylgalactosamine transferase PGAP4.